A 441-amino-acid chain; its full sequence is GTPase Der (441 aa).

2 EngA-type G domains span residues 4–169 (SIVA…PPEA) and 178–353 (PRIA…QNRN). GTP-binding positions include 10-17 (GRPNVGKS), 57-61 (DTGGI), 120-123 (NKVD), 184-191 (GKPNVGKS), 231-235 (DTAGL), and 296-299 (NKWD). One can recognise a KH-like domain in the interval 354 to 438 (LRISTGVLNE…SLKFFIRERK (85 aa)).

The protein belongs to the TRAFAC class TrmE-Era-EngA-EngB-Septin-like GTPase superfamily. EngA (Der) GTPase family. As to quaternary structure, associates with the 50S ribosomal subunit.

Its function is as follows. GTPase that plays an essential role in the late steps of ribosome biogenesis. This chain is GTPase Der, found in Lachnoclostridium phytofermentans (strain ATCC 700394 / DSM 18823 / ISDg) (Clostridium phytofermentans).